Reading from the N-terminus, the 500-residue chain is Cytochrome P450 2D28 (500 aa).

C446 is a binding site for heme.

Belongs to the cytochrome P450 family. Requires heme as cofactor.

The protein resides in the endoplasmic reticulum membrane. Its subcellular location is the microsome membrane. In Mesocricetus auratus (Golden hamster), this protein is Cytochrome P450 2D28 (CYP2D28A).